A 467-amino-acid chain; its full sequence is Xanthan biosynthesis protein XanB (467 aa).

It belongs to the mannose-6-phosphate isomerase type 2 family.

The catalysed reaction is D-mannose 6-phosphate = D-fructose 6-phosphate. The enzyme catalyses alpha-D-mannose 1-phosphate + GTP + H(+) = GDP-alpha-D-mannose + diphosphate. It functions in the pathway nucleotide-sugar biosynthesis; GDP-alpha-D-mannose biosynthesis; GDP-alpha-D-mannose from alpha-D-mannose 1-phosphate (GTP route): step 1/1. It participates in nucleotide-sugar biosynthesis; GDP-alpha-D-mannose biosynthesis; alpha-D-mannose 1-phosphate from D-fructose 6-phosphate: step 1/2. Involved in xanthan production. This Xanthomonas campestris pv. campestris (strain ATCC 33913 / DSM 3586 / NCPPB 528 / LMG 568 / P 25) protein is Xanthan biosynthesis protein XanB (xanB).